The primary structure comprises 110 residues: PTS system oligo-beta-mannoside-specific EIIA component (110 aa).

Residues 9–107 (LTDEQISFQL…VKEMLDLFKT (99 aa)) form the PTS EIIA type-3 domain. The active-site Tele-phosphohistidine intermediate is histidine 83. Histidine 83 carries the phosphohistidine; by HPr modification.

The protein localises to the cytoplasm. In terms of biological role, the phosphoenolpyruvate-dependent sugar phosphotransferase system (sugar PTS), a major carbohydrate active transport system, catalyzes the phosphorylation of incoming sugar substrates concomitantly with their translocation across the cell membrane. The enzyme II GmuABC PTS system is involved in the transport of oligo-glucomannans such as cellobiose or mannobiose. In Bacillus subtilis (strain 168), this protein is PTS system oligo-beta-mannoside-specific EIIA component.